The primary structure comprises 159 residues: ATP synthase subunit b (159 aa).

Residues 2–22 traverse the membrane as a helical segment; sequence NISIPQIIAAILNFIILLLIV.

The protein belongs to the ATPase B chain family. In terms of assembly, F-type ATPases have 2 components, F(1) - the catalytic core - and F(0) - the membrane proton channel. F(1) has five subunits: alpha(3), beta(3), gamma(1), delta(1), epsilon(1). F(0) has three main subunits: a(1), b(2) and c(10-14). The alpha and beta chains form an alternating ring which encloses part of the gamma chain. F(1) is attached to F(0) by a central stalk formed by the gamma and epsilon chains, while a peripheral stalk is formed by the delta and b chains.

It localises to the cell membrane. Functionally, f(1)F(0) ATP synthase produces ATP from ADP in the presence of a proton or sodium gradient. F-type ATPases consist of two structural domains, F(1) containing the extramembraneous catalytic core and F(0) containing the membrane proton channel, linked together by a central stalk and a peripheral stalk. During catalysis, ATP synthesis in the catalytic domain of F(1) is coupled via a rotary mechanism of the central stalk subunits to proton translocation. Component of the F(0) channel, it forms part of the peripheral stalk, linking F(1) to F(0). In Clostridium botulinum (strain ATCC 19397 / Type A), this protein is ATP synthase subunit b.